A 305-amino-acid chain; its full sequence is Ferrochelatase (305 aa).

Residues His-182 and Glu-262 each contribute to the Fe cation site.

This sequence belongs to the ferrochelatase family.

It is found in the cytoplasm. The catalysed reaction is heme b + 2 H(+) = protoporphyrin IX + Fe(2+). The protein operates within porphyrin-containing compound metabolism; protoheme biosynthesis; protoheme from protoporphyrin-IX: step 1/1. Functionally, catalyzes the ferrous insertion into protoporphyrin IX. This is Ferrochelatase from Herpetosiphon aurantiacus (strain ATCC 23779 / DSM 785 / 114-95).